Consider the following 255-residue polypeptide: 3-hydroxyacyl-CoA dehydrogenase type-2 (255 aa).

Serine 14, leucine 16, aspartate 35, aspartate 58, valine 59, and cysteine 85 together coordinate NAD(+). Substrate is bound at residue serine 149. Residues tyrosine 162, lysine 166, phenylalanine 195, and threonine 197 each contribute to the NAD(+) site. Tyrosine 162 serves as the catalytic Proton acceptor.

This sequence belongs to the short-chain dehydrogenases/reductases (SDR) family. Component of mitochondrial ribonuclease P, a complex composed of rswl/MRPP1, scu/MRPP2 and mldr/MRPP3. As to expression, found in many tissues including CNS, imaginal disks and salivary glands. Highest expression in both embryonic gonadal primordia and mature ovaries and testes.

It is found in the mitochondrion. It carries out the reaction a (3S)-3-hydroxyacyl-CoA + NAD(+) = a 3-oxoacyl-CoA + NADH + H(+). The enzyme catalyses (3S)-3-hydroxybutanoyl-CoA + NAD(+) = acetoacetyl-CoA + NADH + H(+). It catalyses the reaction testosterone + NAD(+) = androst-4-ene-3,17-dione + NADH + H(+). The catalysed reaction is 5alpha-androstane-3alpha,17beta-diol + NAD(+) = 17beta-hydroxy-5alpha-androstan-3-one + NADH + H(+). It carries out the reaction 17beta-estradiol + NAD(+) = estrone + NADH + H(+). The enzyme catalyses ursodeoxycholate + NAD(+) = 7-oxolithocholate + NADH + H(+). It catalyses the reaction 3beta,7beta-dihydroxy-5beta-cholan-24-oate + NAD(+) = 3beta-hydroxy-7-oxo-5beta-cholan-24-oate + NADH + H(+). The catalysed reaction is 11-dehydrocorticosterone + NAD(+) = pregn-4-ene-3,11,20,21-tetraone + NADH + H(+). It carries out the reaction cortisone + NAD(+) = 17alpha-hydroxypregn-4-en-3,11,20-trione-21-al + NADH + H(+). The enzyme catalyses cortisol + NAD(+) = 11beta,17alpha-dihydroxypregn-4-ene-3,20,21-trione + NADH + H(+). It catalyses the reaction 5alpha-pregnan-20beta-ol-3-one + NAD(+) = 5alpha-pregnane-3,20-dione + NADH + H(+). The catalysed reaction is 17beta-hydroxy-5alpha-androstan-3-one + NAD(+) = 5alpha-androstan-3,17-dione + NADH + H(+). In terms of biological role, mitochondrial dehydrogenase involved in pathways of fatty acid, and steroid metabolism. Versatile enzyme presenting two types of activity; L-3-hydroxyacyl-CoA dehydrogenase ((3S)-3-hydroxyacyl-CoA dehydrogenase) activity and hydroxysteroid dehydrogenase (HSD) activity with a wide substrate spectrum. As a (3S)-3-hydroxyacyl-CoA dehydrogenase, it functions in the third step of the fatty acid beta-oxidation pathway, a major metabolic process in which fatty acids are oxidized to provide a significant source of energy, while also generating acyl-CoA metabolites used by many metabolic routes. As a HSD, it functions in the degradation pathways of glucocorticoids and sex steroids and epimerization of bile acids; catalyzes the beta-oxidation at position 17 of androgens and estrogens, has 3-alpha-hydroxysteroid dehydrogenase activity with androsterone, and carries out oxidative conversions of 7-beta-hydroxylated bile acids like ursodeoxycholate or isoursodeoxycholate (also known as 3-beta,7-beta-dihydroxy-5-beta-cholan-24-oate or 7-beta-hydroxyisolithocholate, respectively). Also exhibits 20-beta-OH and 21-OH dehydrogenase activities with C21 steroids. Essential for structural and functional integrity of mitochondria. Required for cell survival during embryonic development. May play a role in germline formation. Its function is as follows. In addition to mitochondrial dehydrogenase activity, moonlights as a component of mitochondrial ribonuclease P, a complex that cleaves tRNA molecules in their 5'-ends. Essential for the structural and functional integrity of mitochondria. Function is essential for pupal development. The protein is 3-hydroxyacyl-CoA dehydrogenase type-2 of Drosophila melanogaster (Fruit fly).